A 1013-amino-acid polypeptide reads, in one-letter code: Sodium/potassium-transporting ATPase subunit alpha-3 (1013 aa).

The segment covering 1 to 10 (MGDKKDDKSS) has biased composition (basic and acidic residues). Residues 1–24 (MGDKKDDKSSPKKSKAKERRDLDD) form a disordered region. Over 1 to 77 (MGDKKDDKSS…NALTPPPTTP (77 aa)) the chain is Cytoplasmic. Residues Ser-37 and Ser-56 each carry the phosphoserine modification. Positions 72 to 74 (PPP) are interaction with phosphoinositide-3 kinase. Residues 78-98 (EWVKFCRQLFGGFSILLWIGA) form a helical membrane-spanning segment. Over 99–121 (ILCFLAYGIQAGTEDDPSGDNLY) the chain is Extracellular. The helical transmembrane segment at 122 to 142 (LGIVLAAVVIITGCFSYYQEA) threads the bilayer. Residues 143–278 (KSSKIMESFK…VGKTPIAIEI (136 aa)) are Cytoplasmic-facing. Residues Ser-218 and Ser-265 each carry the phosphoserine modification. The chain crosses the membrane as a helical span at residues 279–298 (EHFIQLITGVAVFLGVSFFI). Topologically, residues 299-310 (LSLILGYTWLEA) are extracellular. A helical transmembrane segment spans residues 311-328 (VIFLIGIIVANVPEGLLA). The Cytoplasmic segment spans residues 329 to 762 (TVTVCLTLTA…EEGRLIFDNL (434 aa)). The 4-aspartylphosphate intermediate role is filled by Asp-366. Ser-442 carries the phosphoserine modification. Tyr-548 is subject to Phosphotyrosine. Asp-707 and Asp-711 together coordinate Mg(2+). The helical transmembrane segment at 763 to 782 (KKSIAYTLTSNIPEITPFLL) threads the bilayer. The Extracellular portion of the chain corresponds to 783-792 (FIMANIPLPL). Residues 793-813 (GTITILCIDLGTDMVPAISLA) traverse the membrane as a helical segment. At 814–833 (YEAAESDIMKRQPRNPRTDK) the chain is on the cytoplasmic side. A helical membrane pass occupies residues 834–856 (LVNERLISMAYGQIGMIQALGGF). Topologically, residues 857-908 (FSYFVILAENGFLPGNLVGIRLNWDDRTVNDLEDSYGQQWTYEQRKVVEFTC) are extracellular. A helical membrane pass occupies residues 909–928 (HTAFFVSIVVVQWADLIICK). Residues 929–941 (TRRNSVFQQGMKN) lie on the Cytoplasmic side of the membrane. The residue at position 933 (Ser-933) is a Phosphoserine; by PKA. Residues 942–960 (KILIFGLFEETALAAFLSY) form a helical membrane-spanning segment. Residues 961 to 975 (CPGMDVALRMYPLKP) lie on the Extracellular side of the membrane. Residues 976–996 (SWWFCAFPYSFLIFVYDEIRK) form a helical membrane-spanning segment. Over 997 to 1013 (LILRRNPGGWVEKETYY) the chain is Cytoplasmic.

The protein belongs to the cation transport ATPase (P-type) (TC 3.A.3) family. Type IIC subfamily. In terms of assembly, the sodium/potassium-transporting ATPase is composed of a catalytic alpha subunit, an auxiliary non-catalytic beta subunit and an additional regulatory subunit. Interacts with regulatory subunit FXYD1.

It localises to the cell membrane. The catalysed reaction is K(+)(out) + Na(+)(in) + ATP + H2O = K(+)(in) + Na(+)(out) + ADP + phosphate + H(+). In terms of biological role, this is the catalytic component of the active enzyme, which catalyzes the hydrolysis of ATP coupled with the exchange of sodium and potassium ions across the plasma membrane. This action creates the electrochemical gradient of sodium and potassium ions, providing the energy for active transport of various nutrients. This Mus musculus (Mouse) protein is Sodium/potassium-transporting ATPase subunit alpha-3 (Atp1a3).